A 141-amino-acid polypeptide reads, in one-letter code: Large ribosomal subunit protein uL11 (141 aa).

The protein belongs to the universal ribosomal protein uL11 family. As to quaternary structure, part of the ribosomal stalk of the 50S ribosomal subunit. Interacts with L10 and the large rRNA to form the base of the stalk. L10 forms an elongated spine to which L12 dimers bind in a sequential fashion forming a multimeric L10(L12)X complex. One or more lysine residues are methylated.

Functionally, forms part of the ribosomal stalk which helps the ribosome interact with GTP-bound translation factors. This is Large ribosomal subunit protein uL11 from Fervidobacterium nodosum (strain ATCC 35602 / DSM 5306 / Rt17-B1).